Consider the following 257-residue polypeptide: 14-3-3-like protein GF14-G (257 aa).

It belongs to the 14-3-3 family.

Its function is as follows. Is associated with a DNA binding complex that binds to the G box, a well-characterized cis-acting DNA regulatory element found in plant genes. The protein is 14-3-3-like protein GF14-G (GF14G) of Oryza sativa subsp. japonica (Rice).